Reading from the N-terminus, the 605-residue chain is Protein ZRG17 (605 aa).

Topologically, residues 1 to 225 (METPQMNAIQ…DLLSNLPWPK (225 aa)) are cytoplasmic. Phosphoserine occurs at positions 16 and 131. Residues 118–178 (PAPKLVPPPP…PSSAASRTSF (61 aa)) form a disordered region. Residues 143–176 (SKRSSMTLDSPFNFTTSTLQPHQQTPPSSAASRT) are compositionally biased toward polar residues. Residues 226-246 (AYIQLSIAALQIFACLITFQV) form a helical membrane-spanning segment. At 247-254 (GHLYSWSN) the chain is on the lumenal side. Residues 255-275 (FITLSHFITYDIIGSLVIIFV) form a helical membrane-spanning segment. Over 276-287 (ENLSQFQVWFTG) the chain is Cytoplasmic. The chain crosses the membrane as a helical span at residues 288–308 (TITFPFGLNRIDVLLSFALAV). Position 309 (Ser-309) is a topological domain, lumenal. Residues 310 to 330 (LCFVGLDLLFHIIEEFIVLFV) traverse the membrane as a helical segment. Residues 331–363 (ESGSSLTNNHDHDEINEQIPHSHIANANDSQNE) lie on the Cytoplasmic side of the membrane. A helical membrane pass occupies residues 364-384 (NITLWYSILMINLVLSTLSLY). The Lumenal segment spans residues 385–399 (KTFYANKYSNLKTKN). Residues 400–420 (PIITITYTAYLFIYPLLLDLL) traverse the membrane as a helical segment. Topologically, residues 421 to 422 (SS) are cytoplasmic. The chain crosses the membrane as a helical span at residues 423-443 (ISDYLATLVISSLILWHGLTI). Over 444–545 (ARWTSTVLLM…ERLSEFKSRY (102 aa)) the chain is Lumenal. Residues 473–482 (DTTAHTQQVE) show a composition bias toward polar residues. The disordered stretch occupies residues 473 to 497 (DTTAHTQQVESKAAKEKPSVRPRSM). Phosphoserine is present on Ser-498. The chain crosses the membrane as a helical span at residues 546 to 566 (ILNYDDIVISKVNFTLYVVLI). Topologically, residues 567 to 605 (KITMKGGSDDDELMLRLAIDKCIQTSIPTCETTIDIDRI) are cytoplasmic.

Its subcellular location is the endoplasmic reticulum membrane. This Saccharomyces cerevisiae (strain ATCC 204508 / S288c) (Baker's yeast) protein is Protein ZRG17 (ZRG17).